We begin with the raw amino-acid sequence, 202 residues long: Orotate phosphoribosyltransferase (202 aa).

Residues lysine 93 and 113-121 (EDIITTGGS) each bind 5-phospho-alpha-D-ribose 1-diphosphate. The orotate site is built by threonine 117 and arginine 145.

Belongs to the purine/pyrimidine phosphoribosyltransferase family. PyrE subfamily. In terms of assembly, homodimer. Requires Mg(2+) as cofactor.

It carries out the reaction orotidine 5'-phosphate + diphosphate = orotate + 5-phospho-alpha-D-ribose 1-diphosphate. Its pathway is pyrimidine metabolism; UMP biosynthesis via de novo pathway; UMP from orotate: step 1/2. Functionally, catalyzes the transfer of a ribosyl phosphate group from 5-phosphoribose 1-diphosphate to orotate, leading to the formation of orotidine monophosphate (OMP). The chain is Orotate phosphoribosyltransferase from Campylobacter jejuni subsp. doylei (strain ATCC BAA-1458 / RM4099 / 269.97).